Reading from the N-terminus, the 141-residue chain is MQLTSFTDYGLRALIYMASLPEGRMTSISEVTDVYGVSRNHMVKIINQLSRAGYVTAVRGKNGGIRLGKSASAIRIGDVVRELEPLSLVNCSSEFCHITPACRLKQALSKAVQSFLTELDNYTLADLVEENQPLYKLLLVE.

In terms of domain architecture, HTH rrf2-type spans 2 to 129 (QLTSFTDYGL…DNYTLADLVE (128 aa)). The segment at residues 28–51 (ISEVTDVYGVSRNHMVKIINQLSR) is a DNA-binding region (H-T-H motif). The [2Fe-2S] cluster site is built by Cys-91, Cys-96, and Cys-102.

[2Fe-2S] cluster serves as cofactor.

Its function is as follows. Nitric oxide-sensitive repressor of genes involved in protecting the cell against nitrosative stress. May require iron for activity. In Escherichia coli O139:H28 (strain E24377A / ETEC), this protein is HTH-type transcriptional repressor NsrR.